Here is a 496-residue protein sequence, read N- to C-terminus: MEFSCVHFLQNKTILVTGATGFLAKVFVEKILRVQPNVNKLYLVVRASDNEAATKRLRTEAFEKDLFKVLRDNLGDEKLNTLLSEKVVPVAGDIAMDHLGMKDSNLRERMQKEIDIVVNVAATTNFDERYDIGLGINTFGALNVLNFAKKCVKAQLLLHVSTAYVCGEKPGLLPEKPFVMEEICNENGLQLDINLERELMKQRLKELNEQGCSEEGTTFYMKELGMERAKLHGWPNTYVFTKSMGEMLLGNHKENLPLVIIRPTMITSTLFEPFPGWIEGLRTVDSVIIAYGKGVLKCFLVDVNSVCDMIPADMVANAMIAAAATHAGGSKVHMVYQVGSSHQNPIIYGEIREILFCYFTKNSLRSRNGSMITVSKMKLIPTLALFSLYMTIRYKLPVQLLKLVDIIYPSREGDEYKNKNRKIDMVMRLVKLYEPYVLFKGIFDDRNTKNLCAKQKEEDNRNSENFMFDFDPKIIKWKDYLINVHIPGLITHVLKK.

This sequence belongs to the fatty acyl-CoA reductase family.

The catalysed reaction is a long-chain fatty acyl-CoA + 2 NADPH + 2 H(+) = a long-chain primary fatty alcohol + 2 NADP(+) + CoA. In terms of biological role, catalyzes the reduction of fatty acyl-CoA to fatty alcohols. Catalyzes specifically the formation of C16:0 fatty alcohol. The chain is Fatty acyl-CoA reductase 8 (FAR8) from Arabidopsis thaliana (Mouse-ear cress).